The following is a 182-amino-acid chain: Ribosome maturation factor RimM (182 aa).

One can recognise a PRC barrel domain in the interval 103–182; it reads EGDYYWKDLM…TIEVDWDPGF (80 aa).

This sequence belongs to the RimM family. Binds ribosomal protein uS19.

The protein localises to the cytoplasm. Functionally, an accessory protein needed during the final step in the assembly of 30S ribosomal subunit, possibly for assembly of the head region. Essential for efficient processing of 16S rRNA. May be needed both before and after RbfA during the maturation of 16S rRNA. It has affinity for free ribosomal 30S subunits but not for 70S ribosomes. The polypeptide is Ribosome maturation factor RimM (Klebsiella pneumoniae subsp. pneumoniae (strain ATCC 700721 / MGH 78578)).